The primary structure comprises 80 residues: U-scoloptoxin(15)-Er1a (80 aa).

A signal peptide spans 1–22 (MQNKGVVLTLFLVVSMAIVISS).

It belongs to the scoloptoxin-15 family. Post-translationally, contains 2 disulfide bonds. As to expression, expressed by the venom gland.

Its subcellular location is the secreted. This chain is U-scoloptoxin(15)-Er1a, found in Ethmostigmus rubripes (Giant centipede).